A 130-amino-acid polypeptide reads, in one-letter code: Small ribosomal subunit protein uS9 (130 aa).

It belongs to the universal ribosomal protein uS9 family.

This chain is Small ribosomal subunit protein uS9, found in Clostridioides difficile (strain 630) (Peptoclostridium difficile).